Here is a 124-residue protein sequence, read N- to C-terminus: Small ribosomal subunit protein uS12 (124 aa).

The disordered stretch occupies residues 1–23 (MATINQLVRKPRKRPVAKSDVPA). Asp89 bears the 3-methylthioaspartic acid mark. The disordered stretch occupies residues 101 to 124 (ALDTSGVQNRRQGRSKYGTKRPKS). The segment covering 111–124 (RQGRSKYGTKRPKS) has biased composition (basic residues).

The protein belongs to the universal ribosomal protein uS12 family. As to quaternary structure, part of the 30S ribosomal subunit. Contacts proteins S8 and S17. May interact with IF1 in the 30S initiation complex.

In terms of biological role, with S4 and S5 plays an important role in translational accuracy. Functionally, interacts with and stabilizes bases of the 16S rRNA that are involved in tRNA selection in the A site and with the mRNA backbone. Located at the interface of the 30S and 50S subunits, it traverses the body of the 30S subunit contacting proteins on the other side and probably holding the rRNA structure together. The combined cluster of proteins S8, S12 and S17 appears to hold together the shoulder and platform of the 30S subunit. This chain is Small ribosomal subunit protein uS12, found in Chromohalobacter salexigens (strain ATCC BAA-138 / DSM 3043 / CIP 106854 / NCIMB 13768 / 1H11).